A 178-amino-acid polypeptide reads, in one-letter code: Nucleoside-triphosphatase THEP1 (178 aa).

ATP-binding positions include Gly9–Ala16 and Val101–Gly108.

Belongs to the THEP1 NTPase family.

The catalysed reaction is a ribonucleoside 5'-triphosphate + H2O = a ribonucleoside 5'-diphosphate + phosphate + H(+). Functionally, has nucleotide phosphatase activity towards ATP, GTP, CTP, TTP and UTP. May hydrolyze nucleoside diphosphates with lower efficiency. In Thermoplasma volcanium (strain ATCC 51530 / DSM 4299 / JCM 9571 / NBRC 15438 / GSS1), this protein is Nucleoside-triphosphatase THEP1.